Consider the following 207-residue polypeptide: Large ribosomal subunit protein uL4 (207 aa).

The segment covering 43–52 has biased composition (polar residues); it reads NKRQGTQSAK. A disordered region spans residues 43-72; that stretch reads NKRQGTQSAKTRAEVRGGGRKPWKQKGTGR. A compositionally biased stretch (basic residues) spans 60-71; it reads GGRKPWKQKGTG.

It belongs to the universal ribosomal protein uL4 family. In terms of assembly, part of the 50S ribosomal subunit.

Functionally, one of the primary rRNA binding proteins, this protein initially binds near the 5'-end of the 23S rRNA. It is important during the early stages of 50S assembly. It makes multiple contacts with different domains of the 23S rRNA in the assembled 50S subunit and ribosome. Its function is as follows. Forms part of the polypeptide exit tunnel. This chain is Large ribosomal subunit protein uL4, found in Alkaliphilus metalliredigens (strain QYMF).